The sequence spans 260 residues: Taurine import ATP-binding protein TauB (260 aa).

An ABC transporter domain is found at 6–235 (AQQVSVVYAS…RYAHGEPVRS (230 aa)). Position 40–47 (40–47 (GASGCGKS)) interacts with ATP.

The protein belongs to the ABC transporter superfamily. Taurine importer (TC 3.A.1.17.1) family. As to quaternary structure, the complex is composed of two ATP-binding proteins (TauB), two transmembrane proteins (TauC) and a solute-binding protein (TauA).

It localises to the cell inner membrane. The enzyme catalyses taurine(out) + ATP + H2O = taurine(in) + ADP + phosphate + H(+). In terms of biological role, part of the ABC transporter complex TauABC involved in taurine import. Responsible for energy coupling to the transport system. In Burkholderia pseudomallei (strain K96243), this protein is Taurine import ATP-binding protein TauB.